We begin with the raw amino-acid sequence, 1339 residues long: Aldehyde oxidase 1 (1339 aa).

The 88-residue stretch at 5–92 folds into the 2Fe-2S ferredoxin-type domain; it reads SELLFYVNGR…GAAVTTVEGI (88 aa). Cys-44, Cys-49, Cys-52, and Cys-74 together coordinate [2Fe-2S] cluster. Gln-113 contributes to the Mo-molybdopterin binding site. The [2Fe-2S] cluster site is built by Cys-114, Cys-117, Cys-149, and Cys-151. Residue Cys-151 participates in Mo-molybdopterin binding. In terms of domain architecture, FAD-binding PCMH-type spans 236–421; sequence FGSDRMTWIS…ISVNIPYSRK (186 aa). Residues 264 to 271, Ala-345, Ser-354, His-358, Asp-367, and Leu-411 contribute to the FAD site; that span reads VVMGNTSV. Mo-molybdopterin is bound by residues 807 to 808 and Met-1048; that span reads AF. A Phosphoserine modification is found at Ser-1069. Mo-molybdopterin-binding positions include 1089 to 1092, Gln-1204, and Leu-1269; that span reads GSVV. Glu-1271 serves as the catalytic Proton acceptor; for azaheterocycle hydroxylase activity.

It belongs to the xanthine dehydrogenase family. In terms of assembly, homodimer. The cofactor is [2Fe-2S] cluster. FAD serves as cofactor. It depends on Mo-molybdopterin as a cofactor. The N-terminus is blocked. Expressed at high levels in liver, lung and spleen. Also expressed in kindey, eye, testis, duodenum, esophagus and thymus (at protein level).

The protein resides in the cytoplasm. The enzyme catalyses an aldehyde + O2 + H2O = a carboxylate + H2O2 + H(+). The catalysed reaction is retinal + O2 + H2O = retinoate + H2O2 + H(+). In terms of biological role, oxidase with broad substrate specificity, oxidizing aromatic azaheterocycles, such as N1-methylnicotinamide, N-methylphthalazinium and phthalazine, as well as aldehydes, such as benzaldehyde, retinal, pyridoxal, and vanillin. Plays a key role in the metabolism of xenobiotics and drugs containing aromatic azaheterocyclic substituents. Is probably involved in the regulation of reactive oxygen species homeostasis. May be a prominent source of superoxide generation via the one-electron reduction of molecular oxygen. May also catalyze nitric oxide (NO) production via the reduction of nitrite to NO with NADH or aldehyde as electron donor. May play a role in adipogenesis. This is Aldehyde oxidase 1 from Bos taurus (Bovine).